The following is a 386-amino-acid chain: Epoxyqueuosine reductase (386 aa).

Residues R57, C97, D134, 139 to 141, S152, N155, I158, and L169 contribute to the cob(II)alamin site; that span reads SDR. The active-site Proton donor is D134. The 4Fe-4S ferredoxin-type domain maps to 178–208; sequence FEPDVPIEDMCGSCTKCLDACPTGALVNPGQ. C188, C191, C194, C198, and C214 together coordinate [4Fe-4S] cluster. S216 contributes to the cob(II)alamin binding site. Residues Q220 and K222 each coordinate tRNA. 3 residues coordinate [4Fe-4S] cluster: C240, C243, and C247. 240–241 is a binding site for cob(II)alamin; that stretch reads CD. Residues N280, R281, R295, K297, and K298 each coordinate tRNA. One copy of the HEAT-like PBS-type repeat lies at 333–357; that stretch reads RGTAAWAIGKIGDPAYAEELEKALE.

The protein belongs to the QueG family. In terms of assembly, monomer. Cob(II)alamin serves as cofactor. Requires [4Fe-4S] cluster as cofactor.

The protein localises to the cytoplasm. The catalysed reaction is epoxyqueuosine(34) in tRNA + AH2 = queuosine(34) in tRNA + A + H2O. It functions in the pathway tRNA modification; tRNA-queuosine biosynthesis. In terms of biological role, catalyzes the conversion of epoxyqueuosine (oQ) to queuosine (Q), which is a hypermodified base found in the wobble positions of tRNA(Asp), tRNA(Asn), tRNA(His) and tRNA(Tyr). This Bacillus subtilis (strain 168) protein is Epoxyqueuosine reductase.